The sequence spans 295 residues: Protoheme IX farnesyltransferase 2 (295 aa).

Transmembrane regions (helical) follow at residues 9–29 (ITKP…FFLA), 36–56 (FALF…GCVF), 83–103 (LPLA…LLYV), 108–128 (LSAF…SLWL), 135–155 (GTLV…CAVS), 163–183 (VTLL…IAIF), 209–229 (IVLY…GGYA), 230–250 (GLGY…MAWG), and 264–284 (VFGF…VDSQ).

The protein belongs to the UbiA prenyltransferase family. Protoheme IX farnesyltransferase subfamily.

Its subcellular location is the cell inner membrane. It carries out the reaction heme b + (2E,6E)-farnesyl diphosphate + H2O = Fe(II)-heme o + diphosphate. It participates in porphyrin-containing compound metabolism; heme O biosynthesis; heme O from protoheme: step 1/1. Its function is as follows. Converts heme B (protoheme IX) to heme O by substitution of the vinyl group on carbon 2 of heme B porphyrin ring with a hydroxyethyl farnesyl side group. In Pseudomonas putida (strain GB-1), this protein is Protoheme IX farnesyltransferase 2.